A 505-amino-acid polypeptide reads, in one-letter code: Glycerol kinase (505 aa).

Thr-12 contacts ADP. Residues Thr-12, Thr-13, and Ser-14 each contribute to the ATP site. A sn-glycerol 3-phosphate-binding site is contributed by Thr-12. Arg-16 provides a ligand contact to ADP. Sn-glycerol 3-phosphate is bound by residues Arg-82, Glu-83, Tyr-134, and Asp-249. Arg-82, Glu-83, Tyr-134, Asp-249, and Gln-250 together coordinate glycerol. Residues Thr-271 and Gly-315 each contribute to the ADP site. ATP contacts are provided by Thr-271, Gly-315, Gln-319, and Gly-416. 2 residues coordinate ADP: Gly-416 and Asn-420.

Belongs to the FGGY kinase family.

It carries out the reaction glycerol + ATP = sn-glycerol 3-phosphate + ADP + H(+). Its pathway is polyol metabolism; glycerol degradation via glycerol kinase pathway; sn-glycerol 3-phosphate from glycerol: step 1/1. Inhibited by fructose 1,6-bisphosphate (FBP). Functionally, key enzyme in the regulation of glycerol uptake and metabolism. Catalyzes the phosphorylation of glycerol to yield sn-glycerol 3-phosphate. The chain is Glycerol kinase from Mycolicibacterium gilvum (strain PYR-GCK) (Mycobacterium gilvum (strain PYR-GCK)).